The following is a 71-amino-acid chain: Guanine nucleotide-binding protein G(I)/G(S)/G(O) subunit gamma-2 (71 aa).

Position 2 is an N-acetylalanine (A2). At C68 the chain carries Cysteine methyl ester. C68 carries S-geranylgeranyl cysteine lipidation. Positions 69–71 (AIL) are cleaved as a propeptide — removed in mature form.

The protein belongs to the G protein gamma family. As to quaternary structure, g proteins are composed of 3 units, alpha, beta and gamma. In this context, interacts with GNB2. The heterodimer formed by GNB1 and GNG2 interacts with ARHGEF5. The heterodimer formed by GNB1 and GNG2 interacts with GRK2. Component of the TAS2R14-GNAI1 complex, consisting of TAS2R14, GNAI1, GNB1 and GNG2. Forms complexes with TAS2R14 and G-proteins; these complexes play a role in the perception of bitterness. Component of the TAS2R14-GNAT3 complex, consisting of TAS2R14, GNAT3, GNB1 and GNG2. Component of the TAS2R14-GNAS2 complex, consisting of TAS2R14, GNAS2, GNB1 and GNG2. Adrenal gland and brain.

The protein resides in the cell membrane. Its function is as follows. Guanine nucleotide-binding proteins (G proteins) are involved as a modulator or transducer in various transmembrane signaling systems. The beta and gamma chains are required for the GTPase activity, for replacement of GDP by GTP, and for G protein-effector interaction. The polypeptide is Guanine nucleotide-binding protein G(I)/G(S)/G(O) subunit gamma-2 (GNG2) (Bos taurus (Bovine)).